The following is a 351-amino-acid chain: Peptide chain release factor 1 (351 aa).

The residue at position 233 (Gln-233) is an N5-methylglutamine.

Belongs to the prokaryotic/mitochondrial release factor family. Methylated by PrmC. Methylation increases the termination efficiency of RF1.

The protein localises to the cytoplasm. Functionally, peptide chain release factor 1 directs the termination of translation in response to the peptide chain termination codons UAG and UAA. This chain is Peptide chain release factor 1, found in Treponema pallidum subsp. pallidum (strain SS14).